The following is a 529-amino-acid chain: Autophagy-related protein 21 (529 aa).

Positions 49–62 are enriched in polar residues; it reads NSLEDSAGCQNPTH. The tract at residues 49–70 is disordered; it reads NSLEDSAGCQNPTHSKTDSQDT. 2 WD repeats span residues 271-311 and 321-361; these read AHHS…GKVK and GHNL…SDIC. The L/FRRG motif signature appears at 318–322; sequence LRRGH. A disordered region spans residues 362–388; sequence TNENSEDRTNHNSDYEDSDGDTSKSSE. Over residues 366 to 375 the composition is skewed to basic and acidic residues; that stretch reads SEDRTNHNSD.

The protein belongs to the WD repeat PROPPIN family.

Its subcellular location is the cytoplasm. It localises to the membrane. The protein resides in the vacuole membrane. In terms of biological role, required for cytoplasm to vacuole transport (Cvt) vesicles formation and mitophagy. Involved in binding of phosphatidylethanolamine to ATG8 and in recruitment of ATG8 and ATG5 to the pre-autophagosomal structure. Protects ATG8 from ARG4-mediated cleavage. The chain is Autophagy-related protein 21 (ATG21) from Candida albicans (strain SC5314 / ATCC MYA-2876) (Yeast).